A 49-amino-acid chain; its full sequence is Osteocalcin (49 aa).

A Gla domain is found at 1–47 (YLYQWLGAPAPYPDPLEPKREVCELNPDCDELADHIGFQEAYRRFYG). P9 bears the 4-hydroxyproline mark. Ca(2+) is bound by residues E17, E21, E24, and D30. 4-carboxyglutamate occurs at positions 17, 21, and 24. The cysteines at positions 23 and 29 are disulfide-linked.

This sequence belongs to the osteocalcin/matrix Gla protein family. Post-translationally, gamma-carboxyglutamate residues are formed by vitamin K dependent carboxylation by GGCX. These residues are essential for the binding of calcium. Decarboxylation promotes the hormone activity.

The protein localises to the secreted. Its function is as follows. The carboxylated form is one of the main organic components of the bone matrix, which constitutes 1-2% of the total bone protein: it acts as a negative regulator of bone formation and is required to limit bone formation without impairing bone resorption or mineralization. The carboxylated form binds strongly to apatite and calcium. Functionally, the uncarboxylated form acts as a hormone secreted by osteoblasts, which regulates different cellular processes, such as energy metabolism, male fertility and brain development. Regulates of energy metabolism by acting as a hormone favoring pancreatic beta-cell proliferation, insulin secretion and sensitivity and energy expenditure. Uncarboxylated osteocalcin hormone also promotes testosterone production in the testes: acts as a ligand for G protein-coupled receptor GPRC6A at the surface of Leydig cells, initiating a signaling response that promotes the expression of enzymes required for testosterone synthesis in a CREB-dependent manner. Also acts as a regulator of brain development: osteocalcin hormone crosses the blood-brain barrier and acts as a ligand for GPR158 on neurons, initiating a signaling response that prevents neuronal apoptosis in the hippocampus, favors the synthesis of all monoamine neurotransmitters and inhibits that of gamma-aminobutyric acid (GABA). Osteocalcin also crosses the placenta during pregnancy and maternal osteocalcin is required for fetal brain development. The chain is Osteocalcin (BGLAP) from Macaca fascicularis (Crab-eating macaque).